Consider the following 269-residue polypeptide: Undecaprenyl-diphosphatase (269 aa).

8 helical membrane-spanning segments follow: residues 1–21, 39–59, 86–106, 112–132, 144–164, 184–204, 210–230, and 249–269; these read MSIFQAIILGAVQGLAEFLPI, LPILFDILLHVATLAAVCTVF, LMMIAAIIVATAVTGVIGLLL, TIDIRLIPIFFIITGLLLIAS, VTLLTAAITGLAQGIGVIPGI, AGEFSFLLSIPAILAAFILEI, LLAGVSPISLISGMISAFVVG, and FAFYLIPLGLGLSIYFWGFAG.

This sequence belongs to the UppP family.

Its subcellular location is the cell inner membrane. The catalysed reaction is di-trans,octa-cis-undecaprenyl diphosphate + H2O = di-trans,octa-cis-undecaprenyl phosphate + phosphate + H(+). Functionally, catalyzes the dephosphorylation of undecaprenyl diphosphate (UPP). Confers resistance to bacitracin. The chain is Undecaprenyl-diphosphatase from Treponema denticola (strain ATCC 35405 / DSM 14222 / CIP 103919 / JCM 8153 / KCTC 15104).